Here is a 734-residue protein sequence, read N- to C-terminus: Photosystem I P700 chlorophyll a apoprotein A2 (734 aa).

8 helical membrane-spanning segments follow: residues 46–69 (IFAS…FHVA), 135–158 (LYAG…LHLQ), 175–199 (LNHH…HVAI), 273–291 (MAHH…GHMY), 330–353 (LHFQ…QHMY), 369–395 (AALY…IFLI), 417–439 (AIIS…LYVH), and 517–535 (FLVH…LILV). [4Fe-4S] cluster contacts are provided by cysteine 559 and cysteine 568. The next 2 membrane-spanning stretches (helical) occupy residues 575-596 (AFYL…YWHW) and 643-665 (LSVW…MFLI). Residues histidine 654, methionine 662, and tyrosine 670 each coordinate chlorophyll a. A phylloquinone-binding site is contributed by tryptophan 671. Residues 707–727 (LVGLAHFSVGYIFTYAAFLIA) traverse the membrane as a helical segment.

This sequence belongs to the PsaA/PsaB family. As to quaternary structure, the PsaA/B heterodimer binds the P700 chlorophyll special pair and subsequent electron acceptors. PSI consists of a core antenna complex that captures photons, and an electron transfer chain that converts photonic excitation into a charge separation. The eukaryotic PSI reaction center is composed of at least 11 subunits. The cofactor is P700 is a chlorophyll a/chlorophyll a' dimer, A0 is one or more chlorophyll a, A1 is one or both phylloquinones and FX is a shared 4Fe-4S iron-sulfur center..

The protein resides in the plastid. The protein localises to the chloroplast thylakoid membrane. It catalyses the reaction reduced [plastocyanin] + hnu + oxidized [2Fe-2S]-[ferredoxin] = oxidized [plastocyanin] + reduced [2Fe-2S]-[ferredoxin]. Functionally, psaA and PsaB bind P700, the primary electron donor of photosystem I (PSI), as well as the electron acceptors A0, A1 and FX. PSI is a plastocyanin-ferredoxin oxidoreductase, converting photonic excitation into a charge separation, which transfers an electron from the donor P700 chlorophyll pair to the spectroscopically characterized acceptors A0, A1, FX, FA and FB in turn. Oxidized P700 is reduced on the lumenal side of the thylakoid membrane by plastocyanin. This chain is Photosystem I P700 chlorophyll a apoprotein A2, found in Pinus koraiensis (Korean pine).